A 241-amino-acid chain; its full sequence is Endo-chitosanase B (241 aa).

Positions 1-17 (MRLSEILAVALVTGATA) are cleaved as a signal peptide. A glycan (N-linked (GlcNAc...) asparagine) is linked at asparagine 86.

The protein belongs to the glycosyl hydrolase 75 family.

Its subcellular location is the secreted. The catalysed reaction is Endohydrolysis of beta-(1-&gt;4)-linkages between D-glucosamine residues in a partly acetylated chitosan.. In terms of biological role, chitosanase catalyzing the endo-type cleavage of chitosan, the deacylated form of chitin. Chitosanase may be crucial in the degradation of the deacetylated portion of chitin in the fungal cell wall. Chitoolisaccharides produced by the hydrolysis of partially N-acetylated chitosan are known to have many biological activities, including antibacterial activity, immune-enhancing effects, and elicitor activity. This chain is Endo-chitosanase B (csnB), found in Aspergillus oryzae (strain ATCC 42149 / RIB 40) (Yellow koji mold).